We begin with the raw amino-acid sequence, 1021 residues long: Immunoglobulin superfamily member 2 (1021 aa).

The N-terminal stretch at 1–20 is a signal peptide; it reads MAGISYVASFFLLLTKLSIG. The Extracellular segment spans residues 21–954; that stretch reads QREVTVQKGP…LPSRICSSAP (934 aa). 7 Ig-like C2-type domains span residues 22–139, 144–265, 279–389, 408–525, 541–651, 656–794, and 808–925; these read REVT…AKTN, PDTL…WMFI, PAVK…RTGS, PAAR…RDLS, LQVS…NSLY, PRAS…WHKL, and PTGS…KWIN. 2 disulfide bridges follow: Cys-43–Cys-121 and Cys-168–Cys-249. An N-linked (GlcNAc...) asparagine glycan is attached at Asn-44. The EWI motif signature appears at 253 to 255; sequence EWI. 5 disulfide bridges follow: Cys-304–Cys-377, Cys-434–Cys-511, Cys-562–Cys-640, Cys-697–Cys-778, and Cys-834–Cys-909. Asn-322 carries an N-linked (GlcNAc...) asparagine glycan. Residues 955-975 traverse the membrane as a helical segment; the sequence is LLYFLFICPFVLLLLLLISLL. Over 976-1021 the chain is Cytoplasmic; that stretch reads CLYWKARKLSTLRSNTRKEKALWVDLKEAGGVTTNRREDEEEDEGN.

Post-translationally, N-glycosylated. As to expression, expressed in lung, thymus and small intestine. Detected in cutaneous dendritic cells, activated T-cells, monocytes and granulocytes as well as with epithelial cells with dendritic morphology. Expressed in some leukemic cells, the CD4(+) CD56(+) blastic tumor cells, as well as in Langerhans cells from LCH (Langerhans cell histiocytosis) patients.

Its subcellular location is the membrane. Plays a role as inhibitor of T-cells proliferation induced by CD3. Inhibits expression of IL2RA on activated T-cells and secretion of IL2. Inhibits tyrosine kinases that are required for IL2 production and cellular proliferation. Inhibits phospholipase C-gamma-1/PLCG1 phosphorylation and subsequent CD3-induced changes in intracellular free calcium. Prevents nuclear translocation of nuclear factor of activated T-cell to the nucleus. Plays a role in the inhibition of T-cell proliferation via IL10 secretion by cutaneous dendritic cells. May be a marker of CD4(+) CD56(+) leukemic tumor cells. The polypeptide is Immunoglobulin superfamily member 2 (CD101) (Homo sapiens (Human)).